The sequence spans 242 residues: NAD-dependent protein deacetylase 1 (242 aa).

The 242-residue stretch at M1–P242 folds into the Deacetylase sirtuin-type domain. The NAD(+) site is built by A19, T23, F30, R31, Q97, V99, D100, and H115. F30 serves as a coordination point for nicotinamide. Residues V99 and D100 each coordinate nicotinamide. H115 serves as the catalytic Proton acceptor. Zn(2+) contacts are provided by C123, C126, C142, and C144. Residues S182, S183, N207, and I226 each contribute to the NAD(+) site.

This sequence belongs to the sirtuin family. Class U subfamily. Zn(2+) serves as cofactor.

The protein localises to the cytoplasm. The catalysed reaction is N(6)-acetyl-L-lysyl-[protein] + NAD(+) + H2O = 2''-O-acetyl-ADP-D-ribose + nicotinamide + L-lysyl-[protein]. Functionally, NAD-dependent protein deacetylase which modulates the activities of several enzymes which are inactive in their acetylated form. The chain is NAD-dependent protein deacetylase 1 from Geobacillus kaustophilus (strain HTA426).